A 952-amino-acid polypeptide reads, in one-letter code: Disintegrin and metalloproteinase domain-containing protein adm-2 (952 aa).

The Extracellular segment spans residues M1–T672. N-linked (GlcNAc...) asparagine glycosylation is found at N125 and N301. Residues R177 to P373 form the Peptidase M12B domain. Intrachain disulfides connect C287–C368, C330–C352, and C332–C337. Zn(2+) is bound at residue H312. E313 is an active-site residue. Positions 316 and 322 each coordinate Zn(2+). The Disintegrin domain maps to D379–N466. N406 carries an N-linked (GlcNAc...) asparagine glycan. 4 cysteine pairs are disulfide-bonded: C438–C458, C624–C634, C628–C640, and C642–C651. Residues V620–E652 enclose the EGF-like domain. Residues L673 to V693 form a helical membrane-spanning segment. The Cytoplasmic portion of the chain corresponds to Y694 to K952. Disordered regions lie at residues I778–T809 and S829–D938. Composition is skewed to basic and acidic residues over residues A798 to T809 and P849 to N873. Residues Q905–H914 show a composition bias toward pro residues. The segment covering K925–D938 has biased composition (basic and acidic residues).

Zn(2+) serves as cofactor. As to expression, expressed in hyp7 large epidermal syncytium (punctate distribution), seam cell syncytia, anterior epidermis, neurons located in the head, tail and central body, proximal oogenic cells (levels increasing in maturing oocytes) and myoepithelial cells of the spermatheca (at protein level). Not detected in mature sperm cells.

It localises to the cell membrane. The protein resides in the endosome membrane. It is found in the lysosome membrane. Its function is as follows. Metalloprotease that cleaves and releases a number of molecules. Negative regulator of lrp-1 protein levels, potentially by influencing its endosomal trafficking. Involved in regulating the molting process. In Caenorhabditis elegans, this protein is Disintegrin and metalloproteinase domain-containing protein adm-2.